The sequence spans 224 residues: Small ribosomal subunit protein uS3 (224 aa).

One can recognise a KH type-2 domain in the interval 20–89; that stretch reads LDEFLANYFK…NVNITVSPVP (70 aa).

It belongs to the universal ribosomal protein uS3 family. Part of the 30S ribosomal subunit.

Functionally, binds the lower part of the 30S subunit head. This Staphylothermus marinus (strain ATCC 43588 / DSM 3639 / JCM 9404 / F1) protein is Small ribosomal subunit protein uS3.